The following is a 1823-amino-acid chain: WD repeat-containing protein DDB_G0292056 (1823 aa).

Residues 1-68 (MTYNNNNNYL…IGNSSGGGGV (68 aa)) are disordered. Over residues 16 to 61 (TSTSTSTSTSTPTSTKTSPLNTSSSSNILKSNSRNPSPNNPTNIGN) the composition is skewed to low complexity. 6 WD repeats span residues 138-177 (QSKWEVGVVDWNSQSPNLVASSSNQDTFIWDIENPKYPLL), 182-222 (SHQR…KAVK), 228-267 (SHILGAIQVKWNRFNSNVLASAHESYLMIWDIRKDSQELN), 270-310 (VHSA…PKST), 312-354 (ITSN…YSTP), and 360-405 (GHTD…KDLF). Disordered stretches follow at residues 418-461 (PTTT…LLST), 530-562 (QPDDDNNNNNLNNLNNNNNTQDNIDNNDDNNNN), 649-687 (NITETNNNNNNHNNSVQNNNNNNNNNNNNNNNSGGGFLK), 714-778 (IDIS…YRPG), 805-840 (ILTNLNNNSNNNSGSGGGGSSNMNASITTSTTTNDQ), 883-940 (IPNN…SSTS), 966-996 (SSSSSISDTTNNTSNTTQNIQNTTKNINPPR), 1014-1058 (NNIT…NDNP), and 1122-1186 (QQLV…NGKS). Low complexity-rich tracts occupy residues 419-432 (TTTTTTTTATTTTT) and 440-461 (LNESTDNNNNTNSLNSSTLLST). Composition is skewed to low complexity over residues 654 to 680 (NNNNNNHNNSVQNNNNNNNNNNNNNNN) and 717 to 748 (SQQQQQQQQQQAATTSTSSSSSSSSNTQQQQQ). Composition is skewed to polar residues over residues 749–768 (FLTATVSNKGGTVLSKSPTS) and 827–840 (MNASITTSTTTNDQ). Low complexity-rich tracts occupy residues 885–926 (NNNK…SSNN), 966–993 (SSSSSISDTTNNTSNTTQNIQNTTKNIN), 1014–1041 (NNITGNNNINSNSNTTNNLTSPNPNRLN), and 1127–1183 (SSSP…NNGN). The stretch at 1207–1250 (ANSYILSGKPVEEICKYNSELAEKENRKDLVKLWNTLGMITDSK) is one WD 7 repeat. Disordered stretches follow at residues 1264–1307 (SHFG…LHQS), 1697–1725 (QQQPQHYQQHRHSMSGTSHYHQQQPHTHN), and 1764–1823 (PQQE…MFSN). Residues 1282–1293 (STGIASSTGSNS) are compositionally biased toward low complexity. A compositionally biased stretch (polar residues) spans 1710 to 1725 (MSGTSHYHQQQPHTHN).

This is WD repeat-containing protein DDB_G0292056 from Dictyostelium discoideum (Social amoeba).